Consider the following 184-residue polypeptide: Small ribosomal subunit protein uS4c (184 aa).

Positions 82–143 (MRLDNILFRL…KQRSKALIQN (62 aa)) constitute an S4 RNA-binding domain.

It belongs to the universal ribosomal protein uS4 family. Part of the 30S ribosomal subunit. Contacts protein S5. The interaction surface between S4 and S5 is involved in control of translational fidelity.

It localises to the plastid. It is found in the chloroplast. Its function is as follows. One of the primary rRNA binding proteins, it binds directly to 16S rRNA where it nucleates assembly of the body of the 30S subunit. In terms of biological role, with S5 and S12 plays an important role in translational accuracy. This is Small ribosomal subunit protein uS4c (rps4) from Patersonia fragilis (Short purple-flag).